We begin with the raw amino-acid sequence, 277 residues long: S-formylglutathione hydrolase FrmB (277 aa).

Residues serine 145, aspartate 221, and histidine 254 each act as charge relay system in the active site.

Belongs to the esterase D family.

The enzyme catalyses S-formylglutathione + H2O = formate + glutathione + H(+). Serine hydrolase involved in the detoxification of formaldehyde. Hydrolyzes S-formylglutathione to glutathione and formate. This is S-formylglutathione hydrolase FrmB (frmB) from Escherichia coli O6:K15:H31 (strain 536 / UPEC).